The sequence spans 229 residues: MNSIKFPVLDRTTKNSVISTTLNDLSNWSRLSSLWPLLYGTSCCFIEFASLIGSRFDFDRYGLVPRSSPRQADLILTAGTVTMKMAPSLVRLYEQMPEPKYVIAMGACTITGGMFSTDSYSTVRGVDKLIPVDVYLPGCPPKPEAVIDAITKLRKKIAREIYKDKIRPQQGNRCFTTNHKFFIVRSTDTGNSDQELLYPPSSTSEISTETFFKYKSPVSSHELVNSGGF.

Residues Cys-43, Cys-44, Cys-108, and Cys-139 each contribute to the [4Fe-4S] cluster site.

Belongs to the complex I 20 kDa subunit family. As to quaternary structure, NDH is composed of at least 16 different subunits, 5 of which are encoded in the nucleus. [4Fe-4S] cluster is required as a cofactor.

The protein localises to the plastid. Its subcellular location is the chloroplast thylakoid membrane. The catalysed reaction is a plastoquinone + NADH + (n+1) H(+)(in) = a plastoquinol + NAD(+) + n H(+)(out). The enzyme catalyses a plastoquinone + NADPH + (n+1) H(+)(in) = a plastoquinol + NADP(+) + n H(+)(out). Its function is as follows. NDH shuttles electrons from NAD(P)H:plastoquinone, via FMN and iron-sulfur (Fe-S) centers, to quinones in the photosynthetic chain and possibly in a chloroplast respiratory chain. The immediate electron acceptor for the enzyme in this species is believed to be plastoquinone. Couples the redox reaction to proton translocation, and thus conserves the redox energy in a proton gradient. This is NAD(P)H-quinone oxidoreductase subunit K, chloroplastic from Aethionema cordifolium (Lebanon stonecress).